Consider the following 193-residue polypeptide: Peptidyl-tRNA hydrolase (193 aa).

His17 contributes to the tRNA binding site. His22 (proton acceptor) is an active-site residue. Residues Phe68, Asn70, and Asn116 each coordinate tRNA.

This sequence belongs to the PTH family. As to quaternary structure, monomer.

Its subcellular location is the cytoplasm. It carries out the reaction an N-acyl-L-alpha-aminoacyl-tRNA + H2O = an N-acyl-L-amino acid + a tRNA + H(+). Hydrolyzes ribosome-free peptidyl-tRNAs (with 1 or more amino acids incorporated), which drop off the ribosome during protein synthesis, or as a result of ribosome stalling. Functionally, catalyzes the release of premature peptidyl moieties from peptidyl-tRNA molecules trapped in stalled 50S ribosomal subunits, and thus maintains levels of free tRNAs and 50S ribosomes. This is Peptidyl-tRNA hydrolase from Xanthomonas euvesicatoria pv. vesicatoria (strain 85-10) (Xanthomonas campestris pv. vesicatoria).